An 828-amino-acid polypeptide reads, in one-letter code: Toll-like receptor 4 (828 aa).

A signal peptide spans 1-23; that stretch reads MMSASRLAGTLIPAMAFLSCVRP. Topologically, residues 24-629 are extracellular; the sequence is ESWEPCVVPN…SLNITCQMNK (606 aa). A disulfide bond links Cys29 and Cys38. Asn33 carries N-linked (GlcNAc...) asparagine glycosylation. LRR repeat units follow at residues 53–74, 77–98, 101–122, 125–146, and 149–170; these read STKN…SFFS, ELQV…AYQS, HLST…AFSG, SLQK…PIGH, and TLKE…EYFS. An N-linked (GlcNAc...) asparagine glycan is attached at Asn171. 3 LRR repeats span residues 174–195, 203–223, and 225–245; these read NLEH…DLQV, NLSL…AFKE, and RLHK…KTCI. The N-linked (GlcNAc...) asparagine glycan is linked to Asn203. Cys279 and Cys304 are joined by a disulfide. 2 N-linked (GlcNAc...) asparagine glycosylation sites follow: Asn280 and Asn307. LRR repeat units follow at residues 372–392, 398–420, 421–442, 446–454, 470–493, 495–516, 519–540, and 543–563; these read SLEF…CSQS, SLKY…LGLE, QLEH…SVFL, NLIYLDISH, SLKV…FTEL, NLTF…AFNS, SLQV…PYKC, and SLQV…QELQ. Cys388 and Cys389 are oxidised to a cystine. N-linked (GlcNAc...) asparagine glycans are attached at residues Asn495 and Asn524. An N-linked (GlcNAc...) asparagine glycan is attached at Asn573. Positions 577–627 constitute an LRRCT domain; sequence NDFACTCEHQSFLQWIKDQRQLLVEVERMECATPSDKQGMPVLSLNITCQM. 2 disulfide bridges follow: Cys581–Cys607 and Cys583–Cys625. Asn622 and Asn628 each carry an N-linked (GlcNAc...) asparagine glycan. A helical transmembrane segment spans residues 630–650; it reads TVIGVSVFSVLVVSVVAVLVY. Topologically, residues 651-828 are cytoplasmic; sequence KFYFHLMLLA…WNPEGTVGTG (178 aa). Residues 670–813 enclose the TIR domain; the sequence is NTYDAFVIYS…IFWRRLRKAL (144 aa).

It belongs to the Toll-like receptor family. As to quaternary structure, belongs to the lipopolysaccharide (LPS) receptor, a multi-protein complex containing at least CD14, LY96 and TLR4. Binding to bacterial LPS leads to homodimerization. Interacts with LY96 via the extracellular domain. Interacts with MYD88 and TIRAP via their respective TIR domains. Interacts with TICAM2. Interacts with NOX4. Interacts with CNPY3 and HSP90B1; this interaction is required for proper folding in the endoplasmic reticulum. Interacts with MAP3K21; this interaction leads to negative regulation of TLR4 signaling. Interacts with CD36, following CD36 stimulation by oxLDL or amyloid-beta 42, and forms a heterodimer with TLR6. The trimeric complex is internalized and triggers inflammatory response. LYN kinase activity facilitates TLR4-TLR6 heterodimerization and signal initiation. Interacts with TICAM1 in response to LPS in a WDFY1-dependent manner. Interacts with WDFY1 in response to LPS. Interacts with SMPDL3B. Interacts with CEACAM1; upon lipopolysaccharide stimulation, forms a complex including TLR4 and the phosphorylated form of SYK and CEACAM1, which in turn, recruits PTPN6 that dephosphorylates SYK, reducing the production of reactive oxygen species (ROS) and lysosome disruption, which in turn, reduces the activity of the inflammasome. Interacts with RFTN1; the interaction occurs in response to lipopolysaccharide stimulation. Interacts with SCIMP; the interaction occurs in response to lipopolysaccharide stimulation and is enhanced by phosphorylation of SCIMP by LYN. This interaction facilitates the phosphorylation of TLR4 by LYN which elicits a selective cytokine response in macrophages. Interacts with TRAF3IP3. Interacts with TREM1; this interaction enhances TLR4-mediated inflammatory response. Interacts with ZG16B/PAUF. Interacts with CD82; this interaction inhibits TLR4-mediated signaling pathway. Phosphorylated on tyrosine residues by LYN after binding lipopolysaccharide. In terms of processing, ubiquitinated by RNF128 via 'Lys-28'-linked polyubiquitin chains, leading to proteasomal degradation.

The protein resides in the cell membrane. It is found in the early endosome. The protein localises to the cell projection. Its subcellular location is the ruffle. In terms of biological role, transmembrane receptor that functions as a pattern recognition receptor recognizing pathogen- and damage-associated molecular patterns (PAMPs and DAMPs) to induce innate immune responses via downstream signaling pathways. At the plasma membrane, cooperates with LY96 to mediate the innate immune response to bacterial lipopolysaccharide (LPS). Also involved in LPS-independent inflammatory responses triggered by free fatty acids, such as palmitate, and Ni(2+). Mechanistically, acts via MYD88, TIRAP and TRAF6, leading to NF-kappa-B activation, cytokine secretion and the inflammatory response. Alternatively, CD14-mediated TLR4 internalization via endocytosis is associated with the initiation of a MYD88-independent signaling via the TICAM1-TBK1-IRF3 axis leading to type I interferon production. In addition to the secretion of proinflammatory cytokines, initiates the activation of NLRP3 inflammasome and formation of a positive feedback loop between autophagy and NF-kappa-B signaling cascade. In complex with TLR6, promotes inflammation in monocytes/macrophages by associating with TLR6 and the receptor CD86. Upon ligand binding, such as oxLDL or amyloid-beta 42, the TLR4:TLR6 complex is internalized and triggers inflammatory response, leading to NF-kappa-B-dependent production of CXCL1, CXCL2 and CCL9 cytokines, via MYD88 signaling pathway, and CCL5 cytokine, via TICAM1 signaling pathway. In myeloid dendritic cells, vesicular stomatitis virus glycoprotein G but not LPS promotes the activation of IRF7, leading to type I IFN production in a CD14-dependent manner. This chain is Toll-like receptor 4 (TLR4), found in Pongo pygmaeus (Bornean orangutan).